The chain runs to 570 residues: Sulfite reductase [NADPH] hemoprotein beta-component (570 aa).

Residues C434, C440, C479, and C483 each coordinate [4Fe-4S] cluster. A siroheme-binding site is contributed by C483.

The protein belongs to the nitrite and sulfite reductase 4Fe-4S domain family. In terms of assembly, alpha(8)-beta(8). The alpha component is a flavoprotein, the beta component is a hemoprotein. Siroheme is required as a cofactor. It depends on [4Fe-4S] cluster as a cofactor.

The enzyme catalyses hydrogen sulfide + 3 NADP(+) + 3 H2O = sulfite + 3 NADPH + 4 H(+). Its pathway is sulfur metabolism; hydrogen sulfide biosynthesis; hydrogen sulfide from sulfite (NADPH route): step 1/1. Functionally, component of the sulfite reductase complex that catalyzes the 6-electron reduction of sulfite to sulfide. This is one of several activities required for the biosynthesis of L-cysteine from sulfate. The sequence is that of Sulfite reductase [NADPH] hemoprotein beta-component from Salmonella enteritidis PT4 (strain P125109).